Consider the following 1290-residue polypeptide: 1-phosphatidylinositol 4,5-bisphosphate phosphodiesterase gamma-1 (1290 aa).

Residue A2 is modified to N-acetylalanine. A PH 1 domain is found at 27–142 (RSLEVGTVMT…WIKGLTWLME (116 aa)). The region spanning 152 to 187 (QIERWLRKQFYSVDRNREDRISAKDLKNMLSQVNYR) is the EF-hand domain. The Ca(2+) site is built by D165, N167, E169, R171, and D176. In terms of domain architecture, PI-PLC X-box spans 320-464 (DTMNNPLSHY…LKRKILIKHK (145 aa)). Catalysis depends on residues H335 and H380. Residues 489–523 (SIKNGILYLEDPVNHEWYPHYFVLTSSKIYYSEET) form the PH 2; first part domain. Position 506 is a phosphotyrosine (Y506). A disordered region spans residues 522–544 (ETSSDQGNEDEEEPKEVSSSTEL). SH2 domains lie at 550–657 (WFHG…SEPV) and 668–756 (WYHA…RYPI). Phosphotyrosine; by SYK is present on Y771. Position 775 is a phosphotyrosine (Y775). Y783 is subject to Phosphotyrosine; by ITK, SYK and TXK. The region spanning 791 to 851 (TFKCAVKALF…PSNYVEEMVN (61 aa)) is the SH3 domain. The 37-residue stretch at 895 to 931 (FVFSISMASVAHWSLDVAADSQEELQDWVKKIREVAQ) folds into the PH 2; second part domain. The region spanning 953–1070 (LSELVVYCRP…GYVLQPSTMR (118 aa)) is the PI-PLC Y-box domain. Y977 is subject to Phosphotyrosine. Positions 1071 to 1194 (DEAFDPFDKS…TGYRAVPLKN (124 aa)) constitute a C2 domain. S1221, P1222, S1227, S1233, and S1248 each carry phosphoserine. Y1253 is subject to Phosphotyrosine. S1263 carries the phosphoserine modification. Residues 1271 to 1290 (FDSRERRAPRRTRVNGDNRL) form a disordered region.

In terms of assembly, interacts with AGAP2 via its SH3 domain. Interacts (via SH2 domain) with RET. Interacts with FLT1 (tyrosine-phosphorylated). Interacts (via SH2 domain) with FGFR1, FGFR2, FGFR3 and FGFR4 (phosphorylated). Interacts with LAT (phosphorylated) upon TCR activation. Interacts (via SH3 domain) with the Pro-rich domain of TNK1. Associates with BLNK, VAV1, GRB2 and NCK1 in a B-cell antigen receptor-dependent fashion. Interacts with CBLB in activated T-cells; which inhibits phosphorylation. Interacts with SHB. Interacts (via SH3 domain) with the Arg/Gly-rich-flanked Pro-rich domains of KHDRBS1/SAM68. This interaction is selectively regulated by arginine methylation of KHDRBS1/SAM68. Interacts with INPP5D/SHIP1, THEMIS and CLNK. Interacts with AXL, FLT4 and KIT. Interacts with RALGPS1. Interacts (via the SH2 domains) with VIL1 (phosphorylated at C-terminus tyrosine phosphorylation sites). Interacts (via SH2 domain) with PDGFRA and PDGFRB (tyrosine phosphorylated). Interacts with PIP5K1C. Interacts with NTRK1 and NTRK2 (phosphorylated upon ligand-binding). Interacts with SYK; activates PLCG1. Interacts with GRB2, LAT and THEMIS upon TCR activation in thymocytes. Interacts with TESPA1; the association is increased with prolonged stimulation of the TCR and may facilitate the assembly of the LAT signalosome. Interacts (via C-terminal proline-rich domain (PRD)) with PLCG1 (via SH3 domain); this interaction leads to guanine nucleotide exchange from PlCG1 to DNM1 and enhances DNM1-dependent endocytosis. As to quaternary structure, (Microbial infection) Interacts (via SH3 domain) with HEV ORF3 protein. The cofactor is Ca(2+). Tyrosine phosphorylated in response to signaling via activated FLT3, KIT and PDGFRA. Tyrosine phosphorylated by activated FGFR1, FGFR2, FGFR3 and FGFR4. Tyrosine phosphorylated by activated FLT1 and KDR. Tyrosine phosphorylated by activated PDGFRB. The receptor-mediated activation of PLCG1 involves its phosphorylation by tyrosine kinases, in response to ligation of a variety of growth factor receptors and immune system receptors. For instance, SYK phosphorylates and activates PLCG1 in response to ligation of the B-cell receptor. May be dephosphorylated by PTPRJ. Phosphorylated by ITK and TXK on Tyr-783 upon TCR activation in T-cells. Post-translationally, ubiquitinated by CBLB in activated T-cells.

It is found in the cell projection. The protein resides in the lamellipodium. It localises to the ruffle. It carries out the reaction a 1,2-diacyl-sn-glycero-3-phospho-(1D-myo-inositol-4,5-bisphosphate) + H2O = 1D-myo-inositol 1,4,5-trisphosphate + a 1,2-diacyl-sn-glycerol + H(+). The enzyme catalyses a 1,2-diacyl-sn-glycero-3-phospho-(1D-myo-inositol) + H2O = 1D-myo-inositol 1-phosphate + a 1,2-diacyl-sn-glycerol + H(+). With respect to regulation, activated by phosphorylation on tyrosine residues. Mediates the production of the second messenger molecules diacylglycerol (DAG) and inositol 1,4,5-trisphosphate (IP3). Plays an important role in the regulation of intracellular signaling cascades. Becomes activated in response to ligand-mediated activation of receptor-type tyrosine kinases, such as PDGFRA, PDGFRB, EGFR, FGFR1, FGFR2, FGFR3 and FGFR4. Plays a role in actin reorganization and cell migration. Guanine nucleotide exchange factor that binds the GTPase DNM1 and catalyzes the dissociation of GDP, allowing a GTP molecule to bind in its place, therefore enhancing DNM1-dependent endocytosis. The chain is 1-phosphatidylinositol 4,5-bisphosphate phosphodiesterase gamma-1 from Homo sapiens (Human).